Reading from the N-terminus, the 171-residue chain is MPLLDSFTVDHTRMNAPAVRVAKTMKTPHGDTITVFDLRFCIPNKQVMPEKGIHTLEHLFAGFMRNHLNGEGVEIIDISPMGCRTGFYMSLIGEPAEVRVADAWKAAMADVLKVKDQSQIPELNIYQCGTYHMHSLTEAQDIAHHILDSDVLVNKNDELALPEEKLTELKV.

Residues histidine 54, histidine 58, and cysteine 128 each coordinate Fe cation.

It belongs to the LuxS family. Homodimer. It depends on Fe cation as a cofactor.

The enzyme catalyses S-(5-deoxy-D-ribos-5-yl)-L-homocysteine = (S)-4,5-dihydroxypentane-2,3-dione + L-homocysteine. Functionally, involved in the synthesis of autoinducer 2 (AI-2) which is secreted by bacteria and is used to communicate both the cell density and the metabolic potential of the environment. The regulation of gene expression in response to changes in cell density is called quorum sensing. Catalyzes the transformation of S-ribosylhomocysteine (RHC) to homocysteine (HC) and 4,5-dihydroxy-2,3-pentadione (DPD). This Photorhabdus laumondii subsp. laumondii (strain DSM 15139 / CIP 105565 / TT01) (Photorhabdus luminescens subsp. laumondii) protein is S-ribosylhomocysteine lyase.